Reading from the N-terminus, the 357-residue chain is U5 small nuclear ribonucleoprotein 40 kDa protein (357 aa).

K18 participates in a covalent cross-link: Glycyl lysine isopeptide (Lys-Gly) (interchain with G-Cter in SUMO2). R21 carries the post-translational modification Asymmetric dimethylarginine. 7 WD repeats span residues G64–A103, G107–R146, G149–T189, Q191–T230, G233–R272, N283–K322, and G325–Q357. A Glycyl lysine isopeptide (Lys-Gly) (interchain with G-Cter in SUMO2) cross-link involves residue K270.

Component of the pre-catalytic and catalytic spliceosome complexes. Component of the postcatalytic spliceosome P complex. Part of the U5 snRNP complex. Interacts with PRPF8. Component of the U4/U6-U5 tri-snRNP complex composed of the U4, U6 and U5 snRNAs and at least PRPF3, PRPF4, PRPF6, PRPF8, PRPF31, SNRNP200, TXNL4A, WDR57, SNRNP40, DDX23, CD2BP2, PPIH, SNU13, EFTUD2, SART1 and USP39. Component of the minor spliceosome, which splices U12-type introns.

It localises to the nucleus. In terms of biological role, required for pre-mRNA splicing as component of the activated spliceosome. Component of the U5 small nuclear ribonucleoprotein (snRNP) complex and the U4/U6-U5 tri-snRNP complex, building blocks of the spliceosome. As a component of the minor spliceosome, involved in the splicing of U12-type introns in pre-mRNAs. This chain is U5 small nuclear ribonucleoprotein 40 kDa protein (SNRNP40), found in Pongo abelii (Sumatran orangutan).